We begin with the raw amino-acid sequence, 86 residues long: Arminin 7246 (86 aa).

The N-terminal stretch at methionine 1–alanine 18 is a signal peptide. Positions arginine 19–alanine 57 are excised as a propeptide. Alanine 83 carries the post-translational modification Alanine amide.

This sequence belongs to the arminin family. In terms of tissue distribution, expressed in entodermal epithelium along the body column.

The protein localises to the secreted. It localises to the target cell membrane. Antimicrobial peptide with a broad-spectrum antimicrobial activity. Keeps its antibacterial activity under a wide range of salt concentrations that mimic physiological conditions of human blood, which is surprising, since Hydra is an obligate freshwater animal with nearly no salt tolerance. Does not affect red blood cells. This is Arminin 7246 from Hydra viridissima (Green hydra).